A 117-amino-acid chain; its full sequence is Ribonuclease P protein component 4 (117 aa).

4 residues coordinate Zn(2+): Cys-64, Cys-67, Cys-93, and Cys-96.

The protein belongs to the eukaryotic/archaeal RNase P protein component 4 family. Consists of a catalytic RNA component and at least 4-5 protein subunits. Zn(2+) serves as cofactor.

It is found in the cytoplasm. The enzyme catalyses Endonucleolytic cleavage of RNA, removing 5'-extranucleotides from tRNA precursor.. Functionally, part of ribonuclease P, a protein complex that generates mature tRNA molecules by cleaving their 5'-ends. The chain is Ribonuclease P protein component 4 from Pyrococcus abyssi (strain GE5 / Orsay).